The primary structure comprises 77 residues: Acyl carrier protein (77 aa).

Residues 1–76 form the Carrier domain; the sequence is MSLEDDVKAI…DVIKYIQERQ (76 aa). An O-(pantetheine 4'-phosphoryl)serine modification is found at Ser-36.

Belongs to the acyl carrier protein (ACP) family. In terms of processing, 4'-phosphopantetheine is transferred from CoA to a specific serine of apo-ACP by AcpS. This modification is essential for activity because fatty acids are bound in thioester linkage to the sulfhydryl of the prosthetic group.

Its subcellular location is the cytoplasm. The protein operates within lipid metabolism; fatty acid biosynthesis. In terms of biological role, carrier of the growing fatty acid chain in fatty acid biosynthesis. This chain is Acyl carrier protein, found in Chlamydia muridarum (strain MoPn / Nigg).